We begin with the raw amino-acid sequence, 86 residues long: Small ribosomal subunit protein bS20 (86 aa).

The segment covering M1–M27 has biased composition (basic residues). The disordered stretch occupies residues M1–M28.

It belongs to the bacterial ribosomal protein bS20 family.

Binds directly to 16S ribosomal RNA. This chain is Small ribosomal subunit protein bS20, found in Aliivibrio fischeri (strain MJ11) (Vibrio fischeri).